Here is a 118-residue protein sequence, read N- to C-terminus: Large ribosomal subunit protein bL20 (118 aa).

It belongs to the bacterial ribosomal protein bL20 family.

Binds directly to 23S ribosomal RNA and is necessary for the in vitro assembly process of the 50S ribosomal subunit. It is not involved in the protein synthesizing functions of that subunit. In Pseudomonas syringae pv. syringae (strain B728a), this protein is Large ribosomal subunit protein bL20.